The sequence spans 223 residues: Deoxyribose-phosphate aldolase 1 (223 aa).

D91 (proton donor/acceptor) is an active-site residue. Residue K154 is the Schiff-base intermediate with acetaldehyde of the active site. The active-site Proton donor/acceptor is K183.

It belongs to the DeoC/FbaB aldolase family. DeoC type 1 subfamily.

It is found in the cytoplasm. The enzyme catalyses 2-deoxy-D-ribose 5-phosphate = D-glyceraldehyde 3-phosphate + acetaldehyde. Its pathway is carbohydrate degradation; 2-deoxy-D-ribose 1-phosphate degradation; D-glyceraldehyde 3-phosphate and acetaldehyde from 2-deoxy-alpha-D-ribose 1-phosphate: step 2/2. Its function is as follows. Catalyzes a reversible aldol reaction between acetaldehyde and D-glyceraldehyde 3-phosphate to generate 2-deoxy-D-ribose 5-phosphate. This is Deoxyribose-phosphate aldolase 1 from Bacillus licheniformis (strain ATCC 14580 / DSM 13 / JCM 2505 / CCUG 7422 / NBRC 12200 / NCIMB 9375 / NCTC 10341 / NRRL NRS-1264 / Gibson 46).